Reading from the N-terminus, the 257-residue chain is NAD-capped RNA hydrolase NudC (257 aa).

2 residues coordinate substrate: lysine 25 and arginine 69. The Zn(2+) site is built by cysteine 98 and cysteine 101. A substrate-binding site is contributed by glutamate 111. Zn(2+)-binding residues include cysteine 116 and cysteine 119. Tyrosine 124 lines the substrate pocket. The region spanning 125–248 is the Nudix hydrolase domain; sequence PQIAPCIIVA…TVARRLIEDT (124 aa). The a divalent metal cation site is built by alanine 158, glutamate 174, and glutamate 178. A Nudix box motif is present at residues 159 to 180; that stretch reads GFVEVGETLEQAVAREVMEESG. 192–199 lines the substrate pocket; that stretch reads QPWPFPQS. Glutamate 219 is an a divalent metal cation binding site. Substrate is bound at residue alanine 241.

The protein belongs to the Nudix hydrolase family. NudC subfamily. As to quaternary structure, homodimer. Mg(2+) serves as cofactor. Requires Mn(2+) as cofactor. Zn(2+) is required as a cofactor.

It catalyses the reaction a 5'-end NAD(+)-phospho-ribonucleoside in mRNA + H2O = a 5'-end phospho-adenosine-phospho-ribonucleoside in mRNA + beta-nicotinamide D-ribonucleotide + 2 H(+). It carries out the reaction NAD(+) + H2O = beta-nicotinamide D-ribonucleotide + AMP + 2 H(+). The catalysed reaction is NADH + H2O = reduced beta-nicotinamide D-ribonucleotide + AMP + 2 H(+). In terms of biological role, mRNA decapping enzyme that specifically removes the nicotinamide adenine dinucleotide (NAD) cap from a subset of mRNAs by hydrolyzing the diphosphate linkage to produce nicotinamide mononucleotide (NMN) and 5' monophosphate mRNA. The NAD-cap is present at the 5'-end of some mRNAs and stabilizes RNA against 5'-processing. Has preference for mRNAs with a 5'-end purine. Catalyzes the hydrolysis of a broad range of dinucleotide pyrophosphates. This chain is NAD-capped RNA hydrolase NudC, found in Escherichia coli O7:K1 (strain IAI39 / ExPEC).